The primary structure comprises 172 residues: 16S rRNA aminocarboxypropyltransferase (172 aa).

The S-adenosyl-L-methionine site is built by Thr21, Leu71, Leu93, and Thr112.

It belongs to the TDD superfamily. TSR3 family.

The protein localises to the cytoplasm. It carries out the reaction an N(1)-methylpseudouridine in rRNA + S-adenosyl-L-methionine = N(1)-methyl-N(3)-[(3S)-3-amino-3-carboxypropyl]pseudouridine in rRNA + S-methyl-5'-thioadenosine + H(+). Functionally, aminocarboxypropyltransferase that catalyzes the aminocarboxypropyl transfer on pseudouridine at position 914 in 16S rRNA. It constitutes the last step in biosynthesis of the hypermodified N1-methyl-N3-(3-amino-3-carboxypropyl) pseudouridine (m1acp3-Psi). This chain is 16S rRNA aminocarboxypropyltransferase, found in Methanocaldococcus jannaschii (strain ATCC 43067 / DSM 2661 / JAL-1 / JCM 10045 / NBRC 100440) (Methanococcus jannaschii).